A 277-amino-acid polypeptide reads, in one-letter code: Orotidine 5'-phosphate decarboxylase (277 aa).

K95 functions as the Proton donor in the catalytic mechanism.

This sequence belongs to the OMP decarboxylase family. Type 2 subfamily.

It catalyses the reaction orotidine 5'-phosphate + H(+) = UMP + CO2. It participates in pyrimidine metabolism; UMP biosynthesis via de novo pathway; UMP from orotate: step 2/2. The protein is Orotidine 5'-phosphate decarboxylase of Mycolicibacterium vanbaalenii (strain DSM 7251 / JCM 13017 / BCRC 16820 / KCTC 9966 / NRRL B-24157 / PYR-1) (Mycobacterium vanbaalenii).